The sequence spans 430 residues: Phosphomethylpyrimidine synthase (430 aa).

Residues Asn-68, Met-96, Tyr-125, His-164, 186 to 188 (SRG), 227 to 230 (DALR), and Glu-266 each bind substrate. Position 270 (His-270) interacts with Zn(2+). Position 293 (Tyr-293) interacts with substrate. A Zn(2+)-binding site is contributed by His-334. The [4Fe-4S] cluster site is built by Cys-410, Cys-413, and Cys-417.

This sequence belongs to the ThiC family. It depends on [4Fe-4S] cluster as a cofactor.

It catalyses the reaction 5-amino-1-(5-phospho-beta-D-ribosyl)imidazole + S-adenosyl-L-methionine = 4-amino-2-methyl-5-(phosphooxymethyl)pyrimidine + CO + 5'-deoxyadenosine + formate + L-methionine + 3 H(+). It functions in the pathway cofactor biosynthesis; thiamine diphosphate biosynthesis. Functionally, catalyzes the synthesis of the hydroxymethylpyrimidine phosphate (HMP-P) moiety of thiamine from aminoimidazole ribotide (AIR) in a radical S-adenosyl-L-methionine (SAM)-dependent reaction. The protein is Phosphomethylpyrimidine synthase of Pyrobaculum aerophilum (strain ATCC 51768 / DSM 7523 / JCM 9630 / CIP 104966 / NBRC 100827 / IM2).